The primary structure comprises 245 residues: uncharacterized protein (245 aa).

To M.tuberculosis Rv2927c.

This is an uncharacterized protein from Mycobacterium leprae (strain TN).